A 186-amino-acid chain; its full sequence is Elongation factor P (186 aa).

An N6-(3,6-diaminohexanoyl)-5-hydroxylysine modification is found at Lys-33.

The protein belongs to the elongation factor P family. Post-translationally, may be beta-lysylated on the epsilon-amino group of Lys-33 by the combined action of EpmA and EpmB, and then hydroxylated on the C5 position of the same residue by EpmC (if this protein is present). Lysylation is critical for the stimulatory effect of EF-P on peptide-bond formation. The lysylation moiety may extend toward the peptidyltransferase center and stabilize the terminal 3-CCA end of the tRNA. Hydroxylation of the C5 position on Lys-33 may allow additional potential stabilizing hydrogen-bond interactions with the P-tRNA.

The protein localises to the cytoplasm. Its pathway is protein biosynthesis; polypeptide chain elongation. In terms of biological role, involved in peptide bond synthesis. Alleviates ribosome stalling that occurs when 3 or more consecutive Pro residues or the sequence PPG is present in a protein, possibly by augmenting the peptidyl transferase activity of the ribosome. Modification of Lys-33 is required for alleviation. The protein is Elongation factor P of Acidithiobacillus ferrooxidans (strain ATCC 23270 / DSM 14882 / CIP 104768 / NCIMB 8455) (Ferrobacillus ferrooxidans (strain ATCC 23270)).